A 393-amino-acid chain; its full sequence is MNSMHPETLMVHGGMDGLTEAGVHVPAIDLSTTNPVNDVATGGDSYEWLATGHALKDGDSAVYQRLWQPGVARFETALAELEHADEAVAFATGMAAMTAALLAAVNAGTPHIVAVRPLYGGSDHLLETGLLGTTVTWAKEAEIASAIQDDTGLVIVETPANPSLDLVDLDSVVAAAGTVPVLVDNTFCTPVLQQPIRHGAALVLHSATKYLGGHGDAMGGIIATNSDWAMRLRQVRAITGALLHPMGAYLLHRGLRTLAVRMRAAQTTAGELAERLAAHPAITAVHYPGLNGQDPRGLLGRQMSGGGAMIALELAGGFDAARSFVEHCSLVVHAVSLGGADTLIQHPASLTHRPVAATAKPGDGLIRLSVGLEHVDDLEDDLIAALDASRAAA.

Pyridoxal 5'-phosphate is bound by residues 63–65 (YQR) and 93–94 (GM). An L-homocysteine-binding site is contributed by Tyr119. Pyridoxal 5'-phosphate is bound at residue 206–208 (SAT). The residue at position 209 (Lys209) is an N6-(pyridoxal phosphate)lysine. Position 367 (Arg367) interacts with L-homocysteine. Position 367 (Arg367) interacts with L-methionine.

It belongs to the trans-sulfuration enzymes family. L-methionine gamma-lyase subfamily. As to quaternary structure, homotetramer. Pyridoxal 5'-phosphate serves as cofactor.

It catalyses the reaction L-methionine + H2O = methanethiol + 2-oxobutanoate + NH4(+). The enzyme catalyses L-homocysteine + H2O = 2-oxobutanoate + hydrogen sulfide + NH4(+) + H(+). Its function is as follows. Catalyzes the alpha,gamma-elimination of L-methionine to produce methanethiol, 2-oxobutanoate and ammonia. Is also able to catalyze the alpha,gamma-elimination of L-homocysteine. The chain is L-methionine gamma-lyase from Brevibacterium sandarakinum.